Here is a 255-residue protein sequence, read N- to C-terminus: Sulfate transporter CysZ (255 aa).

4 helical membrane passes run 26-46 (LFVL…IYFA), 71-91 (LLWP…FTML), 150-170 (LFIL…WLLF), and 211-231 (IVYL…AAVA).

This sequence belongs to the CysZ family.

The protein resides in the cell inner membrane. Its function is as follows. High affinity, high specificity proton-dependent sulfate transporter, which mediates sulfate uptake. Provides the sulfur source for the cysteine synthesis pathway. This Pseudomonas fluorescens (strain SBW25) protein is Sulfate transporter CysZ.